The following is a 620-amino-acid chain: Chaperone protein HscA homolog (620 aa).

Belongs to the heat shock protein 70 family.

Chaperone involved in the maturation of iron-sulfur cluster-containing proteins. Has a low intrinsic ATPase activity which is markedly stimulated by HscB. The sequence is that of Chaperone protein HscA homolog from Paracidovorax citrulli (strain AAC00-1) (Acidovorax citrulli).